The following is an 853-amino-acid chain: Thrombospondin type-1 domain-containing protein 1 (853 aa).

The signal sequence occupies residues 1–24; it reads MKPMLKDFSNLLLVVLCDYVLGEA. Topologically, residues 25-414 are extracellular; the sequence is EYLLLREPGH…QPQGPVKSNN (390 aa). Asn39, Asn53, Asn58, Asn69, Asn80, Asn135, and Asn304 each carry an N-linked (GlcNAc...) asparagine glycan. The 54-residue stretch at 341–394 folds into the TSP type-1 domain; sequence IETWGLWQPWSQCSATCGDGVRERRRVCLTSFPSRPGCPGMSLEASLCSLEECA. Intrachain disulfides connect Cys353/Cys388, Cys357/Cys393, and Cys368/Cys378. The helical transmembrane segment at 415 to 435 threads the bilayer; sequence IVTVTGISLCLFIIIATVLIT. The Cytoplasmic portion of the chain corresponds to 436-853; sequence LWRRFGRPAK…STLSVEKLVI (418 aa). 4 disordered regions span residues 445–518, 624–650, 668–702, and 714–800; these read KCST…ESFQ, TLIR…RNAH, ERSM…QSRG, and QEAS…RKDK. Ser464 is subject to Phosphoserine. Polar residues predominate over residues 671–686; it reads MSTLTPRQAPAYSTRT. The span at 687-697 shows a compositional bias: basic and acidic residues; the sequence is RTCEQAEDRFR. A compositionally biased stretch (polar residues) spans 767 to 795; the sequence is SHKSVSRKQSSPTSPKDSYQRVSPLSPSQ.

As to quaternary structure, part of a complex composed of THSD1, PTK2/FAK1, TLN1 and VCL. Interacts with TLN1.

Its subcellular location is the endosome membrane. The protein resides in the cell junction. The protein localises to the focal adhesion. In terms of biological role, is a positive regulator of nascent focal adhesion assembly, involved in the modulation of endothelial cell attachment to the extracellular matrix. The polypeptide is Thrombospondin type-1 domain-containing protein 1 (THSD1) (Pongo abelii (Sumatran orangutan)).